The primary structure comprises 206 residues: Transcription factor MYB57 (206 aa).

Over residues 1–11 (METTMKKKGRV) the composition is skewed to basic residues. The disordered stretch occupies residues 1-20 (METTMKKKGRVKATITSQKE). 2 HTH myb-type domains span residues 22-74 (EGTV…LNYL) and 75-129 (RPDV…QRHM). 2 DNA-binding regions (H-T-H motif) span residues 50–74 (WNSV…LNYL) and 102–125 (WSKI…RTKI). The interval 138–162 (NHQHHCSGNSQSSGMTTQGSSGKAI) is disordered. Positions 144–159 (SGNSQSSGMTTQGSSG) are enriched in low complexity.

Expressed specifically in flowers.

It localises to the nucleus. In terms of biological role, transcription factor acting redundantly with MYB21 and MYB24 to control stamen filament elongation in the late developed flowers. Repressed at the transcript levels by DELLA proteins. The protein is Transcription factor MYB57 (MYB57) of Arabidopsis thaliana (Mouse-ear cress).